Here is a 452-residue protein sequence, read N- to C-terminus: Serine incorporator 2 (452 aa).

A run of 11 helical transmembrane segments spans residues 5–25 (LGACSLLSCASCLCGSAPCIL), 41–61 (FFTVFLFLGVLVCVIMLSPGV), 96–116 (AVYRMCFAMAAFFFLFSLLMV), 131–151 (GFWFFKFLIFVGITVGAFYIP), 158–178 (IWFYFGVVGSFIFLLIQLLLL), 205–225 (LFFFTLLFYALSITAVALLFV), 236–256 (GKVFIGLNLTLCVCVSIVAIL), 266–286 (SGLLQASVITLYTMFVTWLAL), 319–339 (WDAPSIVGLVVFILCTVFISL), 387–407 (FFHLCLVLASVHIMMTLTNWY), and 426–446 (ICASWTGLLLYLWTLVAPLLL).

It belongs to the TDE1 family.

The protein resides in the cell membrane. It carries out the reaction a 1,2-diacyl-sn-glycero-3-phospho-L-serine(in) = a 1,2-diacyl-sn-glycero-3-phospho-L-serine(out). It catalyses the reaction a 1,2-diacyl-sn-glycero-3-phosphocholine(in) = a 1,2-diacyl-sn-glycero-3-phosphocholine(out). The catalysed reaction is a 1,2-diacyl-sn-glycero-3-phosphoethanolamine(in) = a 1,2-diacyl-sn-glycero-3-phosphoethanolamine(out). Functionally, non-ATP-dependent, non-specific lipid transporter for phosphatidylserine, phosphatidylcholine, and phosphatidylethanolamine. Functions as a scramblase that flips lipids in both directions across the membrane. In contrast to SERINC3 and SERINC5, has no effect on gammaretrovirus particles infectivity. The chain is Serine incorporator 2 (SERINC2) from Bos taurus (Bovine).